A 206-amino-acid chain; its full sequence is Large ribosomal subunit protein uL4 (206 aa).

The protein belongs to the universal ribosomal protein uL4 family. In terms of assembly, part of the 50S ribosomal subunit.

Its function is as follows. One of the primary rRNA binding proteins, this protein initially binds near the 5'-end of the 23S rRNA. It is important during the early stages of 50S assembly. It makes multiple contacts with different domains of the 23S rRNA in the assembled 50S subunit and ribosome. In terms of biological role, forms part of the polypeptide exit tunnel. This Bradyrhizobium sp. (strain ORS 278) protein is Large ribosomal subunit protein uL4.